A 257-amino-acid polypeptide reads, in one-letter code: Pyridoxine 5'-phosphate synthase (257 aa).

Residue Asn6 coordinates 3-amino-2-oxopropyl phosphate. 8–9 (DH) lines the 1-deoxy-D-xylulose 5-phosphate pocket. Arg17 contributes to the 3-amino-2-oxopropyl phosphate binding site. His41 acts as the Proton acceptor in catalysis. 2 residues coordinate 1-deoxy-D-xylulose 5-phosphate: Arg43 and His48. Glu68 functions as the Proton acceptor in the catalytic mechanism. Position 98 (Thr98) interacts with 1-deoxy-D-xylulose 5-phosphate. The Proton donor role is filled by His210. 3-amino-2-oxopropyl phosphate-binding positions include Gly211 and 232 to 233 (GQ).

The protein belongs to the PNP synthase family. As to quaternary structure, homooctamer; tetramer of dimers.

Its subcellular location is the cytoplasm. It catalyses the reaction 3-amino-2-oxopropyl phosphate + 1-deoxy-D-xylulose 5-phosphate = pyridoxine 5'-phosphate + phosphate + 2 H2O + H(+). The protein operates within cofactor biosynthesis; pyridoxine 5'-phosphate biosynthesis; pyridoxine 5'-phosphate from D-erythrose 4-phosphate: step 5/5. Functionally, catalyzes the complicated ring closure reaction between the two acyclic compounds 1-deoxy-D-xylulose-5-phosphate (DXP) and 3-amino-2-oxopropyl phosphate (1-amino-acetone-3-phosphate or AAP) to form pyridoxine 5'-phosphate (PNP) and inorganic phosphate. This chain is Pyridoxine 5'-phosphate synthase, found in Campylobacter jejuni subsp. jejuni serotype O:2 (strain ATCC 700819 / NCTC 11168).